The sequence spans 39 residues: Photosystem II reaction center protein L (39 aa).

A helical transmembrane segment spans residues 18–38; sequence SLYLGLLLIAVLGILFSSYFF.

The protein belongs to the PsbL family. PSII is composed of 1 copy each of membrane proteins PsbA, PsbB, PsbC, PsbD, PsbE, PsbF, PsbH, PsbI, PsbJ, PsbK, PsbL, PsbM, PsbT, PsbX, PsbY, PsbZ, Psb30/Ycf12, peripheral proteins PsbO, CyanoQ (PsbQ), PsbU, PsbV and a large number of cofactors. It forms dimeric complexes.

The protein resides in the cellular thylakoid membrane. In terms of biological role, one of the components of the core complex of photosystem II (PSII). PSII is a light-driven water:plastoquinone oxidoreductase that uses light energy to abstract electrons from H(2)O, generating O(2) and a proton gradient subsequently used for ATP formation. It consists of a core antenna complex that captures photons, and an electron transfer chain that converts photonic excitation into a charge separation. This subunit is found at the monomer-monomer interface and is required for correct PSII assembly and/or dimerization. The protein is Photosystem II reaction center protein L of Picosynechococcus sp. (strain ATCC 27264 / PCC 7002 / PR-6) (Agmenellum quadruplicatum).